Consider the following 284-residue polypeptide: Aldo-keto reductase MAV_3816 (284 aa).

Tyr59 serves as the catalytic Proton donor. Leu199, Ile237, Arg239, Ser240, Ala241, Ser248, and Arg275 together coordinate NADPH.

Belongs to the aldo/keto reductase family.

The sequence is that of Aldo-keto reductase MAV_3816 from Mycobacterium avium (strain 104).